A 352-amino-acid chain; its full sequence is O(6)-methylguanine-induced apoptosis 2 (352 aa).

STPGR repeat units follow at residues 80–90 (NPGPGAYNVAR), 124–139 (PAPN…FSKK), 165–171 (PAPNQYS), 205–235 (GPSP…KTSR), 244–263 (NPGP…KKII), 286–295 (PGPGHYDIVD), and 325–335 (LPGPGAYHPEI).

Belongs to the STPG1 family.

Its subcellular location is the cytoplasm. It is found in the nucleus. Functionally, may positively contribute to the induction of apoptosis triggered by O(6)-methylguanine. The sequence is that of O(6)-methylguanine-induced apoptosis 2 (stpg1) from Xenopus laevis (African clawed frog).